A 391-amino-acid chain; its full sequence is 3-ketoacyl-CoA thiolase, peroxisomal (391 aa).

Catalysis depends on Cys-92, which acts as the Acyl-thioester intermediate. Active-site proton acceptor residues include His-335 and Cys-366.

Belongs to the thiolase-like superfamily. Thiolase family. As to quaternary structure, homodimer.

It localises to the peroxisome. The catalysed reaction is an acyl-CoA + acetyl-CoA = a 3-oxoacyl-CoA + CoA. The protein operates within lipid metabolism; fatty acid metabolism. The polypeptide is 3-ketoacyl-CoA thiolase, peroxisomal (FOX3) (Encephalitozoon cuniculi (strain GB-M1) (Microsporidian parasite)).